The primary structure comprises 377 residues: Glutamate 5-kinase (377 aa).

ATP is bound at residue K21. Residues S61, D149, and N161 each contribute to the substrate site. Residues 181–182 (SD) and 223–229 (SGGMTSK) contribute to the ATP site. One can recognise a PUA domain in the interval 286 to 363 (RGSVQVDAGA…REHEELLGYA (78 aa)).

It belongs to the glutamate 5-kinase family.

Its subcellular location is the cytoplasm. The enzyme catalyses L-glutamate + ATP = L-glutamyl 5-phosphate + ADP. It functions in the pathway amino-acid biosynthesis; L-proline biosynthesis; L-glutamate 5-semialdehyde from L-glutamate: step 1/2. Its function is as follows. Catalyzes the transfer of a phosphate group to glutamate to form L-glutamate 5-phosphate. The protein is Glutamate 5-kinase of Novosphingobium aromaticivorans (strain ATCC 700278 / DSM 12444 / CCUG 56034 / CIP 105152 / NBRC 16084 / F199).